A 329-amino-acid chain; its full sequence is MATGQKLMSAIRVFKFGGPEVMKLQSDVAIPIPKDNQVLIKVHACGVNPVDTYIRSGTHNMKPLLPYTPGLDVAGIVEAVGEHVSSFKKGDRVFTVSTLSGGYAEYALAADDTVYMLPEKLDFKQGAAIGIPYFTACLALLHSACVKAGEIVLIHGASGGVGIAACQIARAYGLKVLGTAGTEEGQNIVLQNGAHEVFNHREVNYIDKIKKSVGEKGIDVIIEMLANVNLSNDLNLLSHGGRVIIVGSRGPIEINPRDTMTKGSSIKGVALYSSTKEEFQQLAAALQAGMEVGWLRPVIGPVYPLEKAAQAHEDIIHSRGATGKMILLL.

Alanine 2 carries the post-translational modification N-acetylalanine. The residue at position 23 (lysine 23) is an N6-acetyllysine. NADP(+) is bound by residues tyrosine 53, 158 to 161, glycine 181, histidine 200, asparagine 229, 246 to 249, and 269 to 271; these read SGGV, VGSR, and VAL. At serine 248 the chain carries Phosphoserine.

This sequence belongs to the zinc-containing alcohol dehydrogenase family. Quinone oxidoreductase subfamily. Homotetramer.

It is found in the cytoplasm. The enzyme catalyses 2 a quinone + NADPH + H(+) = 2 a 1,4-benzosemiquinone + NADP(+). Does not have alcohol dehydrogenase activity. Binds NADP and acts through a one-electron transfer process. Orthoquinones, such as 1,2-naphthoquinone or 9,10-phenanthrenequinone, are the best substrates (in vitro). May act in the detoxification of xenobiotics. Interacts with (AU)-rich elements (ARE) in the 3'-UTR of target mRNA species and enhances their stability. NADPH binding interferes with mRNA binding. This chain is Quinone oxidoreductase (CRYZ), found in Sus scrofa (Pig).